The following is a 151-amino-acid chain: Ribosome maturation factor RimP (151 aa).

Belongs to the RimP family.

Its subcellular location is the cytoplasm. Its function is as follows. Required for maturation of 30S ribosomal subunits. The sequence is that of Ribosome maturation factor RimP from Aliivibrio fischeri (strain MJ11) (Vibrio fischeri).